A 113-amino-acid polypeptide reads, in one-letter code: Protein S100-A9 (113 aa).

The residue at position 2 (alanine 2) is an N-acetylalanine. 2 EF-hand domains span residues 13-48 and 55-90; these read ISTI…DLPN and RNEN…LIFA. Histidine 21 is a binding site for Zn(2+). Serine 24 and histidine 29 together coordinate Ca(2+). Residue aspartate 31 participates in Zn(2+) binding. Residues threonine 32, glutamate 37, aspartate 68, asparagine 70, aspartate 72, glutamine 74, and glutamate 79 each coordinate Ca(2+). Zn(2+)-binding residues include histidine 92 and histidine 96. Histidine 107 is modified (pros-methylhistidine).

In terms of assembly, homodimer. Preferentially exists as a heterodimer or heterotetramer with S100A8 known as calprotectin (S100A8/A9). S100A9 interacts with ATP2A2. S100A9 interacts with AGER, and with the heterodimeric complex formed by TLR4 and LY96 in the presence of calcium and/or zinc ions. S100A9 binds quinoline-3-carboxamides in the presence of calcium and/or zinc ions. S100A9 interacts with amyloid-beta protein 40. Calprotectin (S100A8/9) interacts with CEACAM3 and tubulin filaments in a calcium-dependent manner. Heterotetrameric calprotectin (S100A8/A9) interacts with ANXA6 and associates with tubulin filaments in activated monocytes. Calprotectin (S100A8/9) interacts with NCF2/P67PHOX, RAC1, RAC2, CYBA and CYBB. Calprotectin (S100A8/9) interacts with NOS2 to form the iNOS-S100A8/A9 transnitrosylase complex; induced by LDL(ox). Calprotectin (S100A8/9) interacts with CD69. Phosphorylated. Phosphorylation inhibits activation of tubulin polymerization. In terms of processing, methylation at His-107 by METTL9 reduces zinc-binding without affecting heterodimerization with S100A8. In terms of tissue distribution, highly expressed at sites of inflammation.

It is found in the secreted. Its subcellular location is the cytoplasm. The protein localises to the cytoskeleton. The protein resides in the cell membrane. Its function is as follows. S100A9 is a calcium- and zinc-binding protein which plays a prominent role in the regulation of inflammatory processes and immune response. It can induce neutrophil chemotaxis, adhesion, can increase the bactericidal activity of neutrophils by promoting phagocytosis via activation of SYK, PI3K/AKT, and ERK1/2 and can induce degranulation of neutrophils by a MAPK-dependent mechanism. Predominantly found as calprotectin (S100A8/A9) which has a wide plethora of intra- and extracellular functions. The intracellular functions include: facilitating leukocyte arachidonic acid trafficking and metabolism, modulation of the tubulin-dependent cytoskeleton during migration of phagocytes and activation of the neutrophilic NADPH-oxidase. Also participates in regulatory T-cell differentiation together with CD69. Activates NADPH-oxidase by facilitating the enzyme complex assembly at the cell membrane, transferring arachidonic acid, an essential cofactor, to the enzyme complex and S100A8 contributes to the enzyme assembly by directly binding to NCF2/P67PHOX. The extracellular functions involve pro-inflammatory, antimicrobial, oxidant-scavenging and apoptosis-inducing activities. Its pro-inflammatory activity includes recruitment of leukocytes, promotion of cytokine and chemokine production, and regulation of leukocyte adhesion and migration. Acts as an alarmin or a danger associated molecular pattern (DAMP) molecule and stimulates innate immune cells via binding to pattern recognition receptors such as Toll-like receptor 4 (TLR4) and receptor for advanced glycation endproducts (AGER). Binding to TLR4 and AGER activates the MAP-kinase and NF-kappa-B signaling pathways resulting in the amplification of the pro-inflammatory cascade. Has antimicrobial activity towards bacteria and fungi and exerts its antimicrobial activity probably via chelation of Zn(2+) which is essential for microbial growth. Can induce cell death via autophagy and apoptosis and this occurs through the cross-talk of mitochondria and lysosomes via reactive oxygen species (ROS) and the process involves BNIP3. Can regulate neutrophil number and apoptosis by an anti-apoptotic effect; regulates cell survival via ITGAM/ITGB and TLR4 and a signaling mechanism involving MEK-ERK. Its role as an oxidant scavenger has a protective role in preventing exaggerated tissue damage by scavenging oxidants. The iNOS-S100A8/A9 transnitrosylase complex is proposed to direct selective inflammatory stimulus-dependent S-nitrosylation of multiple targets such as GAPDH, NXA5, EZR, MSN and VIM by recognizing a [IL]-x-C-x-x-[DE] motif. The polypeptide is Protein S100-A9 (S100a9) (Rattus norvegicus (Rat)).